Consider the following 254-residue polypeptide: 3-deoxy-manno-octulosonate cytidylyltransferase (254 aa).

The protein belongs to the KdsB family.

It is found in the cytoplasm. It catalyses the reaction 3-deoxy-alpha-D-manno-oct-2-ulosonate + CTP = CMP-3-deoxy-beta-D-manno-octulosonate + diphosphate. Its pathway is nucleotide-sugar biosynthesis; CMP-3-deoxy-D-manno-octulosonate biosynthesis; CMP-3-deoxy-D-manno-octulosonate from 3-deoxy-D-manno-octulosonate and CTP: step 1/1. It participates in bacterial outer membrane biogenesis; lipopolysaccharide biosynthesis. Functionally, activates KDO (a required 8-carbon sugar) for incorporation into bacterial lipopolysaccharide in Gram-negative bacteria. This chain is 3-deoxy-manno-octulosonate cytidylyltransferase, found in Pseudomonas aeruginosa (strain ATCC 15692 / DSM 22644 / CIP 104116 / JCM 14847 / LMG 12228 / 1C / PRS 101 / PAO1).